The sequence spans 193 residues: ATP-dependent Clp protease proteolytic subunit (193 aa).

Ser98 serves as the catalytic Nucleophile. His123 is an active-site residue.

It belongs to the peptidase S14 family. Fourteen ClpP subunits assemble into 2 heptameric rings which stack back to back to give a disk-like structure with a central cavity, resembling the structure of eukaryotic proteasomes.

It is found in the cytoplasm. The enzyme catalyses Hydrolysis of proteins to small peptides in the presence of ATP and magnesium. alpha-casein is the usual test substrate. In the absence of ATP, only oligopeptides shorter than five residues are hydrolyzed (such as succinyl-Leu-Tyr-|-NHMec, and Leu-Tyr-Leu-|-Tyr-Trp, in which cleavage of the -Tyr-|-Leu- and -Tyr-|-Trp bonds also occurs).. Functionally, cleaves peptides in various proteins in a process that requires ATP hydrolysis. Has a chymotrypsin-like activity. Plays a major role in the degradation of misfolded proteins. In Mannheimia succiniciproducens (strain KCTC 0769BP / MBEL55E), this protein is ATP-dependent Clp protease proteolytic subunit.